Here is a 512-residue protein sequence, read N- to C-terminus: MKIYSWGSGNLGQLGIGNTDDSVSTPTLVLPPDGKKDYEIVNDIVGGGCHSMMIIDNGDLYTFGSNDSGQLGINSNEQQQQQQQQQQQQQQQQQQQQQQQQYQTIPTILNYFKINSIKIKNCSGGWAHSLACDNNGNIYSWGSNSHGQLGIDTTCSLNSTLSTSNNKNNNNNNNNNNNNNNNNNNNNNNNNNNNNNSGGVIKKKIVLKKKKVERKNLNEPKLIEILFNNKIRIVSVSCGMRHSIALSSENDVYGWGCNKFGQLSNLIDGNSLKSNNNNNNINDIADPMVQDSPKLINFKNEIKIIQISCGFQHTLLLDINFKNVLSFGQNKFGQLGNGNFIDQSNPCVIDISSFILPTSTSKSLNDIKIKEIQCGWSNSCLLTNQDKLYICGRGEYGILGDNRDLSLDNSNSNQFKLLNSESFNENKIKNFSIGSEHILIQVYSNDNNNNNNNNNNIYSFGWNEHYQLGLCEPIIIGKDGDNKSFPQLLPSIKGNDKSLVKAGGGNSFFILP.

RCC1 repeat units follow at residues 1–56 (MKIY…MIID), 58–134 (GDLY…ACDN), 135–185 (NGNI…NNNN), 197–248 (SGGV…ALSS), 249–319 (ENDV…LLDI), 321–384 (FKNV…LLTN), 386–443 (DKLY…IQVY), and 454–512 (NNNI…FILP). Residues 66–77 (NDSGQLGINSNE) show a composition bias toward polar residues. 2 disordered regions span residues 66–85 (NDSGQLGINSNEQQQQQQQQ) and 162–200 (STSNNKNNNNNNNNNNNNNNNNNNNNNNNNNNNNNSGGV). Residues 162–196 (STSNNKNNNNNNNNNNNNNNNNNNNNNNNNNNNNN) show a composition bias toward low complexity.

The chain is RCC1 domain-containing protein DDB_G0279253 from Dictyostelium discoideum (Social amoeba).